The primary structure comprises 517 residues: UDP-N-acetylmuramoyl-L-alanyl-D-glutamate--2,6-diaminopimelate ligase (517 aa).

Leu-34 and Ser-36 together coordinate UDP-N-acetyl-alpha-D-muramoyl-L-alanyl-D-glutamate. Residue 122-128 (GTSGKTT) coordinates ATP. UDP-N-acetyl-alpha-D-muramoyl-L-alanyl-D-glutamate-binding positions include 164-165 (TT), Ser-191, and Arg-199. Lys-231 carries the N6-carboxylysine modification. Meso-2,6-diaminopimelate contacts are provided by residues Arg-394, 418–421 (DNPR), Gly-476, and Glu-480. Residues 418–421 (DNPR) carry the Meso-diaminopimelate recognition motif motif.

The protein belongs to the MurCDEF family. MurE subfamily. Mg(2+) is required as a cofactor. Post-translationally, carboxylation is probably crucial for Mg(2+) binding and, consequently, for the gamma-phosphate positioning of ATP.

The protein localises to the cytoplasm. It catalyses the reaction UDP-N-acetyl-alpha-D-muramoyl-L-alanyl-D-glutamate + meso-2,6-diaminopimelate + ATP = UDP-N-acetyl-alpha-D-muramoyl-L-alanyl-gamma-D-glutamyl-meso-2,6-diaminopimelate + ADP + phosphate + H(+). It participates in cell wall biogenesis; peptidoglycan biosynthesis. In terms of biological role, catalyzes the addition of meso-diaminopimelic acid to the nucleotide precursor UDP-N-acetylmuramoyl-L-alanyl-D-glutamate (UMAG) in the biosynthesis of bacterial cell-wall peptidoglycan. The sequence is that of UDP-N-acetylmuramoyl-L-alanyl-D-glutamate--2,6-diaminopimelate ligase from Corynebacterium glutamicum (strain ATCC 13032 / DSM 20300 / JCM 1318 / BCRC 11384 / CCUG 27702 / LMG 3730 / NBRC 12168 / NCIMB 10025 / NRRL B-2784 / 534).